The primary structure comprises 200 residues: Probable GTP-binding protein EngB (200 aa).

The EngB-type G domain occupies 30-199 (KKAEVAIAGR…EDYIYENWIK (170 aa)). GTP is bound by residues 38–45 (GRSNAGKS), 64–68 (GKTRL), 82–85 (DMPG), 149–152 (TKAD), and 178–180 (VSA). Ser45 and Thr66 together coordinate Mg(2+).

The protein belongs to the TRAFAC class TrmE-Era-EngA-EngB-Septin-like GTPase superfamily. EngB GTPase family. Mg(2+) serves as cofactor.

In terms of biological role, necessary for normal cell division and for the maintenance of normal septation. The protein is Probable GTP-binding protein EngB of Bdellovibrio bacteriovorus (strain ATCC 15356 / DSM 50701 / NCIMB 9529 / HD100).